A 211-amino-acid chain; its full sequence is Small ribosomal subunit protein uS4 (211 aa).

Positions 99–160 (RRLDSVVYQM…KSRNIQQVRE (62 aa)) constitute an S4 RNA-binding domain.

The protein belongs to the universal ribosomal protein uS4 family. In terms of assembly, part of the 30S ribosomal subunit. Contacts protein S5. The interaction surface between S4 and S5 is involved in control of translational fidelity.

Functionally, one of the primary rRNA binding proteins, it binds directly to 16S rRNA where it nucleates assembly of the body of the 30S subunit. With S5 and S12 plays an important role in translational accuracy. The polypeptide is Small ribosomal subunit protein uS4 (Petrotoga mobilis (strain DSM 10674 / SJ95)).